We begin with the raw amino-acid sequence, 326 residues long: MNGKIALEEHFATEETLMDSAGFVPDKDWPELRSRLLDIQDRRVRLMDEHGIETMILSLNAPAVQAIADSTRANETARRANDFLAEQVAKQPTRFRGFAALPMQDPELAARELERCVKELGFVGALVNGFSQDNRSAVPLYYDMAQYWPFWETVQALDVPFYLHPRNPLPSDARIYDGHAWLLGPTWAFGQETAVHALRLMGSGLFDKYPALKIILGHMGEGLPYSMWRIDHRNAWIKTTPKYPAKRKIVDYFNENFYLTTSGNFRTQTLIDAILEIGADRILFSTDWPFENIDHAADWFENTSISEADRKKIGWGNAQNLFKLNR.

4 residues coordinate Mn(2+): glutamate 8, histidine 10, histidine 164, and aspartate 287. The active site involves aspartate 287.

The protein belongs to the metallo-dependent hydrolases superfamily. ACMSD family. In terms of assembly, homotetramer. Requires Mn(2+) as cofactor.

The catalysed reaction is 2,6-dihydroxybenzoate + H(+) = resorcinol + CO2. The enzyme catalyses 2,3-dihydroxybenzoate + H(+) = catechol + CO2. It functions in the pathway aromatic compound metabolism. Activity is inhibited by 2-nitroresorcinol (2-NR). Functionally, involved in the gamma-resorcylate (2,6-dihydroxybenzoate) catabolism. Catalyzes the reversible decarboxylation of gamma-resorcylate to resorcinol. Also catalyzes the decarboxylation of 2,3-dihydroxybenzoate to catechol, 2,4,6-trihydroxybenzoate to benzene-1,3,5-triol, and 2,6-dihydroxy-4-methylbenzoate to 5-methylbenzene-1,3-diol. The chain is Gamma-resorcylate decarboxylase from Polaromonas sp. (strain JS666 / ATCC BAA-500).